The chain runs to 255 residues: Keratin-associated protein 10-2 (255 aa).

22 tandem repeats follow at residues 26-30 (CCELP), 36-40 (CCAPA), 57-61 (CCQAA), 79-83 (CCQQS), 89-93 (CCTSS), 99-103 (CCVPV), 104-108 (CCKPV), 109-113 (CCVPV), 114-118 (CCGAS), 120-124 (CCQQS), 130-134 (CCASS), 145-149 (CCKAV), 150-154 (CCVPT), 162-166 (CCQQS), 172-176 (CCTSS), 182-186 (CCVSV), 187-191 (CCKPV), 192-196 (CCKSI), 197-201 (CCVPV), 209-213 (CCQQS), 219-223 (CCTSS), and 224-228 (CCRPS). Residues 26–228 (CCELPCGTPS…CCTSSCCRPS (203 aa)) are 22 X 5 AA repeats of C-C-X(3).

This sequence belongs to the KRTAP type 10 family. In terms of assembly, interacts with hair keratins. In terms of tissue distribution, restricted to a narrow region of the hair fiber cuticle, lying approximately 20 cell layers above the apex of the dermal papilla of the hair root; not detected in any other tissues.

Functionally, in the hair cortex, hair keratin intermediate filaments are embedded in an interfilamentous matrix, consisting of hair keratin-associated proteins (KRTAP), which are essential for the formation of a rigid and resistant hair shaft through their extensive disulfide bond cross-linking with abundant cysteine residues of hair keratins. The matrix proteins include the high-sulfur and high-glycine-tyrosine keratins. The polypeptide is Keratin-associated protein 10-2 (KRTAP10-2) (Homo sapiens (Human)).